The sequence spans 216 residues: uncharacterized protein (216 aa).

The first 17 residues, Met-1 to Ala-17, serve as a signal peptide directing secretion. A lipid anchor (N-palmitoyl cysteine) is attached at Cys-18. Cys-18 is lipidated: S-diacylglycerol cysteine. Residues Ser-133–Cys-162 are a coiled coil.

Its subcellular location is the cell membrane. This is an uncharacterized protein from Rickettsia conorii (strain ATCC VR-613 / Malish 7).